Consider the following 292-residue polypeptide: Probable endonuclease lcl3 (292 aa).

The tract at residues 1–27 is disordered; it reads MRWPPWSSESTNDEQKQTPSSWLSSAA. Positions 17-27 are enriched in polar residues; it reads QTPSSWLSSAA. A helical transmembrane segment spans residues 45–61; the sequence is IIPTVVLTSGILIAVRF. The TNase-like domain maps to 83 to 250; it reads RSIFGQVTSV…KKRARGLWKD (168 aa). Arg-134 is a catalytic residue. Residue Asp-139 coordinates Ca(2+). Catalysis depends on residues Glu-142 and Arg-182. A disordered region spans residues 257–292; sequence GWESPREYKNRMGMGDPLPIEKGNGKGNGKGKIGQK. The segment covering 281–292 has biased composition (gly residues); sequence GKGNGKGKIGQK.

It belongs to the LCL3 family.

The protein resides in the mitochondrion. The protein localises to the membrane. This chain is Probable endonuclease lcl3 (lcl3), found in Penicillium rubens (strain ATCC 28089 / DSM 1075 / NRRL 1951 / Wisconsin 54-1255) (Penicillium chrysogenum).